The following is a 313-amino-acid chain: Ubiquitin-conjugating enzyme E2 Z (313 aa).

The UBC core domain maps to 58-212 (QCVLRIKRDI…IRHETIRVAV (155 aa)). Catalysis depends on cysteine 147, which acts as the Glycyl thioester intermediate. Positions 283–313 (VREKHRKETVDIDSDSSSSETETDTQGSSNP) are disordered. Residues 297-313 (DSSSSETETDTQGSSNP) are compositionally biased toward low complexity.

Belongs to the ubiquitin-conjugating enzyme family.

It is found in the cytoplasm. The protein resides in the nucleus. The enzyme catalyses S-ubiquitinyl-[E1 ubiquitin-activating enzyme]-L-cysteine + [E2 ubiquitin-conjugating enzyme]-L-cysteine = [E1 ubiquitin-activating enzyme]-L-cysteine + S-ubiquitinyl-[E2 ubiquitin-conjugating enzyme]-L-cysteine.. The protein operates within protein modification; protein ubiquitination. Its function is as follows. Catalyzes the covalent attachment of ubiquitin to other proteins. May be involved in apoptosis regulation. This chain is Ubiquitin-conjugating enzyme E2 Z (ube2z), found in Xenopus tropicalis (Western clawed frog).